The sequence spans 221 residues: Phosphoribosylformylglycinamidine synthase subunit PurQ (221 aa).

Residues 2 to 221 enclose the Glutamine amidotransferase type-1 domain; that stretch reads NVGVIVFPGS…FAGLLEPVAA (220 aa). The active-site Nucleophile is cysteine 86. Active-site residues include histidine 194 and glutamate 196.

In terms of assembly, part of the FGAM synthase complex composed of 1 PurL, 1 PurQ and 2 PurS subunits.

The protein localises to the cytoplasm. It catalyses the reaction N(2)-formyl-N(1)-(5-phospho-beta-D-ribosyl)glycinamide + L-glutamine + ATP + H2O = 2-formamido-N(1)-(5-O-phospho-beta-D-ribosyl)acetamidine + L-glutamate + ADP + phosphate + H(+). It carries out the reaction L-glutamine + H2O = L-glutamate + NH4(+). It functions in the pathway purine metabolism; IMP biosynthesis via de novo pathway; 5-amino-1-(5-phospho-D-ribosyl)imidazole from N(2)-formyl-N(1)-(5-phospho-D-ribosyl)glycinamide: step 1/2. Its function is as follows. Part of the phosphoribosylformylglycinamidine synthase complex involved in the purines biosynthetic pathway. Catalyzes the ATP-dependent conversion of formylglycinamide ribonucleotide (FGAR) and glutamine to yield formylglycinamidine ribonucleotide (FGAM) and glutamate. The FGAM synthase complex is composed of three subunits. PurQ produces an ammonia molecule by converting glutamine to glutamate. PurL transfers the ammonia molecule to FGAR to form FGAM in an ATP-dependent manner. PurS interacts with PurQ and PurL and is thought to assist in the transfer of the ammonia molecule from PurQ to PurL. This is Phosphoribosylformylglycinamidine synthase subunit PurQ from Synechococcus sp. (strain ATCC 27144 / PCC 6301 / SAUG 1402/1) (Anacystis nidulans).